The sequence spans 534 residues: MFKRSLKVLLSNPPINRVKPSSTIIQPLSNTTTTTIINNNNITNFEKMTHKKSMTIDNICQNVRNAQYAVRGELVIRAEAISHQLQKQKTEGTKTLPFEEIVYCNIGNPQQLKQKPLTYFRQVVSLVECPDLLDNPYVEKIYPADVISRAKEILGSINNTTGAYSNSQGIGLVLRSVADFIERRDGHKSDPSEIFLTDGASVGVQRILKLLIKDRSDGILIPIPQYPLYSATIELYNGSQLGYLLNEEKGWSLEISQLEHSYNDAVSKGINPRALVIINPGNPTGQCLDRANMEEIVKFCLEKNVVLLADEVYQENVYVKESKPFISFKKVVKDMGGDYADLEMVSFHSVSKGFVGECGKRGGYMELNGVTQDVKAEIYKLASIGLCPNVIGQLVVDLMVRPPVAGEQSHDLYLKERDNIYESLKKRANLLTNALNNLEGVTCNPSEGAMYAFPQIRLPAKAVEYANSIGKAPDAYYCIQLLEATGICVVPGSGFGQKDGTWHFRTTFLPSEEAIEGVCKRIADFHQSFMNKYK.

The N-terminal 18 residues, 1–18, are a transit peptide targeting the mitochondrion; sequence MFKRSLKVLLSNPPINRV. The residue at position 352 (lysine 352) is an N6-(pyridoxal phosphate)lysine.

This sequence belongs to the class-I pyridoxal-phosphate-dependent aminotransferase family. Alanine aminotransferase subfamily. Homodimer. Requires pyridoxal 5'-phosphate as cofactor.

The protein localises to the mitochondrion matrix. It catalyses the reaction L-alanine + 2-oxoglutarate = pyruvate + L-glutamate. The protein operates within amino-acid degradation; L-alanine degradation via transaminase pathway; pyruvate from L-alanine: step 1/1. The chain is Probable alanine aminotransferase, mitochondrial (gpt) from Dictyostelium discoideum (Social amoeba).